We begin with the raw amino-acid sequence, 160 residues long: Cytochrome b6-f complex subunit 4 (160 aa).

3 consecutive transmembrane segments (helical) span residues 36–56 (LLYI…GLAV), 95–115 (LLGI…PFIE), and 131–151 (TVFL…ALPI).

This sequence belongs to the cytochrome b family. PetD subfamily. In terms of assembly, the 4 large subunits of the cytochrome b6-f complex are cytochrome b6, subunit IV (17 kDa polypeptide, PetD), cytochrome f and the Rieske protein, while the 4 small subunits are PetG, PetL, PetM and PetN. The complex functions as a dimer.

Its subcellular location is the cellular thylakoid membrane. In terms of biological role, component of the cytochrome b6-f complex, which mediates electron transfer between photosystem II (PSII) and photosystem I (PSI), cyclic electron flow around PSI, and state transitions. This chain is Cytochrome b6-f complex subunit 4, found in Parasynechococcus marenigrum (strain WH8102).